The sequence spans 227 residues: Ribonuclease 3 (227 aa).

In terms of domain architecture, RNase III spans 5–127; that stretch reads YQKLSRRIGY…IIGAMYLDAG (123 aa). E40 contributes to the Mg(2+) binding site. D44 is a catalytic residue. Positions 113 and 116 each coordinate Mg(2+). The active site involves E116. Residues 154–224 form the DRBM domain; sequence DAKTRLQEFL…AAKALKKLEK (71 aa).

Belongs to the ribonuclease III family. As to quaternary structure, homodimer. Requires Mg(2+) as cofactor.

The protein localises to the cytoplasm. It catalyses the reaction Endonucleolytic cleavage to 5'-phosphomonoester.. In terms of biological role, digests double-stranded RNA. Involved in the processing of primary rRNA transcript to yield the immediate precursors to the large and small rRNAs (23S and 16S). Processes some mRNAs, and tRNAs when they are encoded in the rRNA operon. Processes pre-crRNA and tracrRNA of type II CRISPR loci if present in the organism. This Marinomonas sp. (strain MWYL1) protein is Ribonuclease 3.